Reading from the N-terminus, the 92-residue chain is Small ribosomal subunit protein uS19 (92 aa).

This sequence belongs to the universal ribosomal protein uS19 family.

Its function is as follows. Protein S19 forms a complex with S13 that binds strongly to the 16S ribosomal RNA. This chain is Small ribosomal subunit protein uS19, found in Mycoplasmopsis synoviae (strain 53) (Mycoplasma synoviae).